Consider the following 196-residue polypeptide: ATP-dependent Clp protease proteolytic subunit (196 aa).

Ser-101 serves as the catalytic Nucleophile. Residue His-126 is part of the active site.

The protein belongs to the peptidase S14 family. Component of the chloroplastic Clp protease core complex.

It localises to the plastid. It is found in the chloroplast stroma. The enzyme catalyses Hydrolysis of proteins to small peptides in the presence of ATP and magnesium. alpha-casein is the usual test substrate. In the absence of ATP, only oligopeptides shorter than five residues are hydrolyzed (such as succinyl-Leu-Tyr-|-NHMec, and Leu-Tyr-Leu-|-Tyr-Trp, in which cleavage of the -Tyr-|-Leu- and -Tyr-|-Trp bonds also occurs).. In terms of biological role, cleaves peptides in various proteins in a process that requires ATP hydrolysis. Has a chymotrypsin-like activity. Plays a major role in the degradation of misfolded proteins. In Nasturtium officinale (Watercress), this protein is ATP-dependent Clp protease proteolytic subunit.